Consider the following 37-residue polypeptide: Cytochrome b6-f complex subunit 5 (37 aa).

A helical membrane pass occupies residues 5–25 (LLSGIVLGLIPITLAGLFVTA).

The protein belongs to the PetG family. As to quaternary structure, the 4 large subunits of the cytochrome b6-f complex are cytochrome b6, subunit IV (17 kDa polypeptide, PetD), cytochrome f and the Rieske protein, while the 4 small subunits are PetG, PetL, PetM and PetN. The complex functions as a dimer.

It is found in the plastid. The protein localises to the chloroplast thylakoid membrane. Functionally, component of the cytochrome b6-f complex, which mediates electron transfer between photosystem II (PSII) and photosystem I (PSI), cyclic electron flow around PSI, and state transitions. PetG is required for either the stability or assembly of the cytochrome b6-f complex. This chain is Cytochrome b6-f complex subunit 5, found in Chara vulgaris (Common stonewort).